A 471-amino-acid polypeptide reads, in one-letter code: Plant intracellular Ras-group-related LRR protein 2 (471 aa).

The stretch at 106 to 133 (VVRLDEVHDSYEKKLKDTEEELSRVYST) forms a coiled coil. LRR repeat units lie at residues 159 to 182 (GGTV…FWKV), 183 to 205 (VGLV…ISKL), 206 to 229 (KKLE…GMLL), 231 to 251 (LRIL…IAHC), 253 to 275 (SLVE…GYGL), 276 to 298 (QNLE…ISEM), 300 to 321 (NLKY…IGRL), 324 to 346 (LEVL…ITDL), 347 to 369 (TNLR…FYRL), and 371 to 392 (KLEK…VATQ). The GVYW; degenerate motif lies at 393 to 405 (GAEVVREFMRKRW).

It belongs to the SHOC2 family. In terms of tissue distribution, widely expressed but preferentially in roots.

Its function is as follows. Leucine-rich repeat protein that likely mediates protein interactions, possibly in the context of signal transduction. The chain is Plant intracellular Ras-group-related LRR protein 2 (PIRL2) from Arabidopsis thaliana (Mouse-ear cress).